A 260-amino-acid polypeptide reads, in one-letter code: Adenosylcobinamide-GDP ribazoletransferase (260 aa).

Helical transmembrane passes span 43–63, 64–84, 117–137, 143–163, 197–217, and 237–257; these read LVGTLVGLIAALVFYLTQFIF, PASVAVVLAMIATVLLTGGFH, GSLALMLALLLKFQLLSELAL, VAGGLVLGHTLSRAFAASIIF, VICLLLTGVGATLVILVTLFV, and TLGACQQILELVVYLVLLLLW.

This sequence belongs to the CobS family. The cofactor is Mg(2+).

The protein localises to the cell inner membrane. The catalysed reaction is alpha-ribazole + adenosylcob(III)inamide-GDP = adenosylcob(III)alamin + GMP + H(+). It carries out the reaction alpha-ribazole 5'-phosphate + adenosylcob(III)inamide-GDP = adenosylcob(III)alamin 5'-phosphate + GMP + H(+). It functions in the pathway cofactor biosynthesis; adenosylcobalamin biosynthesis; adenosylcobalamin from cob(II)yrinate a,c-diamide: step 7/7. Functionally, joins adenosylcobinamide-GDP and alpha-ribazole to generate adenosylcobalamin (Ado-cobalamin). Also synthesizes adenosylcobalamin 5'-phosphate from adenosylcobinamide-GDP and alpha-ribazole 5'-phosphate. This Shewanella amazonensis (strain ATCC BAA-1098 / SB2B) protein is Adenosylcobinamide-GDP ribazoletransferase.